The sequence spans 190 residues: Segregation and condensation protein B (190 aa).

It belongs to the ScpB family. As to quaternary structure, homodimer. Homodimerization may be required to stabilize the binding of ScpA to the Smc head domains. Component of a cohesin-like complex composed of ScpA, ScpB and the Smc homodimer, in which ScpA and ScpB bind to the head domain of Smc. The presence of the three proteins is required for the association of the complex with DNA.

The protein localises to the cytoplasm. Participates in chromosomal partition during cell division. May act via the formation of a condensin-like complex containing Smc and ScpA that pull DNA away from mid-cell into both cell halves. The polypeptide is Segregation and condensation protein B (Bacillus cereus (strain ATCC 10987 / NRS 248)).